The primary structure comprises 464 residues: Putative F-box/LRR-repeat protein At3g59160 (464 aa).

Residues 12–60 enclose the F-box domain; that stretch reads KDMINDLPDALLCHVLSYLTTKEAASTSLLSRRWRYLLAFVPNLEFDDS. LRR repeat units follow at residues 172–198, 200–225, 233–258, 336–367, 368–393, and 408–433; these read TLKI…HLES, MFDE…VLHH, SCSV…GMHE, VLCL…TIQS, TPKV…VFQG, and KIEK…VLHY.

This chain is Putative F-box/LRR-repeat protein At3g59160, found in Arabidopsis thaliana (Mouse-ear cress).